The primary structure comprises 685 residues: Methionine--tRNA ligase (685 aa).

Residues 12–22 carry the 'HIGH' region motif; that stretch reads PYANGSIHLGH. Positions 143, 146, 156, and 159 each coordinate Zn(2+). The short motif at 339 to 343 is the 'KMSKS' region element; the sequence is KMSKS. K342 contacts ATP. The tRNA-binding domain occupies 582 to 685; the sequence is DFMKIDMRVA…AGAQPGDKVG (104 aa).

The protein belongs to the class-I aminoacyl-tRNA synthetase family. MetG type 1 subfamily. In terms of assembly, homodimer. Zn(2+) serves as cofactor.

It is found in the cytoplasm. The catalysed reaction is tRNA(Met) + L-methionine + ATP = L-methionyl-tRNA(Met) + AMP + diphosphate. Its function is as follows. Is required not only for elongation of protein synthesis but also for the initiation of all mRNA translation through initiator tRNA(fMet) aminoacylation. The polypeptide is Methionine--tRNA ligase (Neisseria meningitidis serogroup A / serotype 4A (strain DSM 15465 / Z2491)).